A 306-amino-acid chain; its full sequence is Putative syntaxin-131 (306 aa).

N-acetylmethionine is present on methionine 1. Over 1–276 the chain is Cytoplasmic; sequence MNDLLKGSLE…AVKSQKSSRK (276 aa). A compositionally biased stretch (basic and acidic residues) spans 11–23; the sequence is FSRDRSNRSDIES. The interval 11–35 is disordered; that stretch reads FSRDRSNRSDIESGHGPGNSGDLGL. Coiled-coil stretches lie at residues 35 to 72 and 134 to 162; these read LSGF…VTKA and KKKF…VERR. The t-SNARE coiled-coil homology domain maps to 205–267; sequence LAEIQERHDA…QSGNNQLTKA (63 aa). Residues 277-297 form a helical; Anchor for type IV membrane protein membrane-spanning segment; sequence WMCIAILILLIIIIITVISVL. The Vesicular portion of the chain corresponds to 298-306; the sequence is KPWTQKNGA.

The protein belongs to the syntaxin family. Part of the t-SNARE complex.

The protein localises to the membrane. Functionally, vesicle trafficking protein that functions in the secretory pathway. The chain is Putative syntaxin-131 (SYP131) from Arabidopsis thaliana (Mouse-ear cress).